The sequence spans 233 residues: Pyridoxal phosphate homeostasis protein (233 aa).

At K36 the chain carries N6-(pyridoxal phosphate)lysine.

The protein belongs to the pyridoxal phosphate-binding protein YggS/PROSC family.

Functionally, pyridoxal 5'-phosphate (PLP)-binding protein, which is involved in PLP homeostasis. The chain is Pyridoxal phosphate homeostasis protein from Vibrio alginolyticus.